The sequence spans 230 residues: MKEREKVVRLAKLAEQAERYDDMVEFMKTLARMDVDMSAEERLLFSVGFKKTIGARRASWRILESLEQKVTAGDQPGVTINGYKKKVEDELRAVCNEVLSIIAIHCLPLANSGENVVFFYKMKGDYYRYLAEFSTGTEKKAATDQSLMAYQAWPCAQLFSLLEIMNSPERASQVAKQALDEATAEINSAGVEGYKDSMLMMQLLKENLALWTSELTGGETSKDDDVVMEG.

Belongs to the 14-3-3 family.

In terms of biological role, is associated with a DNA binding complex that binds to the G box, a well-characterized cis-acting DNA regulatory element found in plant genes. This is Putative 14-3-3-like protein GF14-H (GF14H) from Oryza sativa subsp. japonica (Rice).